The following is a 363-amino-acid chain: DNA replication and repair protein RecF (363 aa).

30 to 37 provides a ligand contact to ATP; that stretch reads GPNGSGKT.

It belongs to the RecF family.

The protein resides in the cytoplasm. In terms of biological role, the RecF protein is involved in DNA metabolism; it is required for DNA replication and normal SOS inducibility. RecF binds preferentially to single-stranded, linear DNA. It also seems to bind ATP. The sequence is that of DNA replication and repair protein RecF from Chlorobium phaeobacteroides (strain BS1).